The sequence spans 726 residues: MSDKNHHSKCPVIHGANTNQQASEFNWWPKSLNLEILHQHDHKTDPMGADFNYADAFNSLDFEEVKKDLKDLMTDSQDWWPADWGHYGGLMIRMAWHSAGTYRIADGRGGASRGNQRFAPLNSWPDNGNLDKARRLLWPIKRKYGNKLSWADLMILAGNMAYESMGFKTFGFAGGREDIWHPEKDIYWGAEKEWLQPSGGENNRYSGERDLENPLAAVMMGLIYVNPEGVDGKPDPLKTAHDMRVTFARMAMNDEETVALTAGGHTVGKAHGNGDASVLEPEPEGAEIEDQGFGWLNKTSRGIGRDTVTSGVEGAWTTHPTKWDNGYFHLLFTYDWEITKSPAGAAQWEPIDIKEEDMPVDVEDSSIRHNPMMTDADMALKYDPEYRKIAERFRDNPKEFEDCFARAWFKLTHRDLGPKSRYLGPDVPAEDLIWQDPVPPVSYYLSEDNIDALKMAILNSELSIAELVSTAWDSARTYRGSDRRGGANGARIRLAPQKDWVGNEPERLQKVLNVLDEIRTMHHSPISMADLIVLAGGVGIEKAASNAGMNISVPFSQGRGDATDVMTDAESFDVLEPIHDGFRNWLKSDYVVTAEELLLERSQLMQLTAVEMTVLIGGMRVLGTNYGGTSQGVFTDNVGALTNDFFVHLTDMSYTWHPAGDNQYEIRERASGQTKWTASRVDLVFGSNSVLRSYAEVYAQDDNKEKFVQDFVAAWVKVMNNDRFDL.

Positions 96–224 (WHSAGTYRIA…LAAVMMGLIY (129 aa)) form a cross-link, tryptophyl-tyrosyl-methioninium (Trp-Tyr) (with M-250). Catalysis depends on His-97, which acts as the Proton acceptor. A cross-link (tryptophyl-tyrosyl-methioninium (Tyr-Met) (with W-96)) is located at residues 224-250 (YVNPEGVDGKPDPLKTAHDMRVTFARM). Heme b is bound at residue His-265.

This sequence belongs to the peroxidase family. Peroxidase/catalase subfamily. Homodimer or homotetramer. Heme b serves as cofactor. In terms of processing, formation of the three residue Trp-Tyr-Met cross-link is important for the catalase, but not the peroxidase activity of the enzyme.

It catalyses the reaction H2O2 + AH2 = A + 2 H2O. The enzyme catalyses 2 H2O2 = O2 + 2 H2O. Its function is as follows. Bifunctional enzyme with both catalase and broad-spectrum peroxidase activity. The polypeptide is Catalase-peroxidase (Vibrio campbellii (strain ATCC BAA-1116)).